Here is a 217-residue protein sequence, read N- to C-terminus: Probable GTP-binding protein EngB (217 aa).

In terms of domain architecture, EngB-type G spans 32–205 (GTPQIAFAGR…RKIVYSLIET (174 aa)). GTP contacts are provided by residues 40–47 (GRSNAGKS), 67–71 (GKTKL), 85–88 (DLPG), 152–155 (TKID), and 184–186 (VSN). Residues serine 47 and threonine 69 each coordinate Mg(2+).

It belongs to the TRAFAC class TrmE-Era-EngA-EngB-Septin-like GTPase superfamily. EngB GTPase family. It depends on Mg(2+) as a cofactor.

Its function is as follows. Necessary for normal cell division and for the maintenance of normal septation. In Leptospira interrogans serogroup Icterohaemorrhagiae serovar copenhageni (strain Fiocruz L1-130), this protein is Probable GTP-binding protein EngB.